The sequence spans 585 residues: Proline--tRNA ligase (585 aa).

This sequence belongs to the class-II aminoacyl-tRNA synthetase family. ProS type 1 subfamily. As to quaternary structure, homodimer.

It localises to the cytoplasm. It carries out the reaction tRNA(Pro) + L-proline + ATP = L-prolyl-tRNA(Pro) + AMP + diphosphate. In terms of biological role, catalyzes the attachment of proline to tRNA(Pro) in a two-step reaction: proline is first activated by ATP to form Pro-AMP and then transferred to the acceptor end of tRNA(Pro). As ProRS can inadvertently accommodate and process non-cognate amino acids such as alanine and cysteine, to avoid such errors it has two additional distinct editing activities against alanine. One activity is designated as 'pretransfer' editing and involves the tRNA(Pro)-independent hydrolysis of activated Ala-AMP. The other activity is designated 'posttransfer' editing and involves deacylation of mischarged Ala-tRNA(Pro). The misacylated Cys-tRNA(Pro) is not edited by ProRS. This Mycolicibacterium vanbaalenii (strain DSM 7251 / JCM 13017 / BCRC 16820 / KCTC 9966 / NRRL B-24157 / PYR-1) (Mycobacterium vanbaalenii) protein is Proline--tRNA ligase.